The chain runs to 122 residues: Large ribosomal subunit protein uL14 (122 aa).

It belongs to the universal ribosomal protein uL14 family. In terms of assembly, part of the 50S ribosomal subunit. Forms a cluster with proteins L3 and L19. In the 70S ribosome, L14 and L19 interact and together make contacts with the 16S rRNA in bridges B5 and B8.

Binds to 23S rRNA. Forms part of two intersubunit bridges in the 70S ribosome. The chain is Large ribosomal subunit protein uL14 from Bacillus mycoides (strain KBAB4) (Bacillus weihenstephanensis).